The chain runs to 315 residues: Calumenin (315 aa).

Residues M1–S19 form the signal peptide. A Phosphoserine modification is found at S44. Residue Y47 is modified to Phosphotyrosine. T65 is modified (phosphothreonine). EF-hand domains are found at residues E68–R103, W104–D139, Q151–D186, M188–N223, W229–D264, and H265–S300. A Phosphoserine; by FAM20C modification is found at S69. Ca(2+) is bound by residues D81, D83, D85, E92, D117, N119, D121, and E128. N131 carries N-linked (GlcNAc...) (complex) asparagine glycosylation. Residue D164 participates in Ca(2+) binding. Residue K165 is modified to N6-acetyllysine. Ca(2+) is bound by residues D166, D168, E175, D201, N203, D205, E212, D242, N244, D246, K248, and E253. Residue T254 is modified to Phosphothreonine. S261 and S277 each carry phosphoserine. D278, N280, D282, K284, and E289 together coordinate Ca(2+). A Prevents secretion from ER motif is present at residues H312–F315.

Belongs to the CREC family. As to quaternary structure, interacts with GGCX. Ubiquitously expressed. Expressed at high levels in heart, placenta and skeletal muscle, at lower levels in lung, kidney and pancreas and at very low levels in brain and liver.

The protein resides in the endoplasmic reticulum membrane. The protein localises to the golgi apparatus. It localises to the secreted. Its subcellular location is the melanosome. It is found in the sarcoplasmic reticulum lumen. In terms of biological role, involved in regulation of vitamin K-dependent carboxylation of multiple N-terminal glutamate residues. Seems to inhibit gamma-carboxylase GGCX. Binds 7 calcium ions with a low affinity. The sequence is that of Calumenin (CALU) from Homo sapiens (Human).